The following is a 349-amino-acid chain: Phloroglucinol synthase (349 aa).

The active site involves C138.

This sequence belongs to the thiolase-like superfamily. Chalcone/stilbene synthases family.

It carries out the reaction 3 malonyl-CoA + 3 H(+) = 1,3,5-trihydroxybenzene + 3 CO2 + 3 CoA. It functions in the pathway antibiotic biosynthesis. In terms of biological role, type III polyketide synthase that catalyzes the synthesis of phloroglucinol from three molecules of malonyl-CoA. In addition to its ability to produce phloroglucinol from malonyl-CoA, it exhibits broad substrate specificity, accepting C4-C12 aliphatic acyl-CoAs and phenylacetyl-CoA as the starters to form C6-polyoxoalkylated alpha-pyrones from sequential condensation with malonyl-CoA. This chain is Phloroglucinol synthase, found in Pseudomonas fluorescens (strain ATCC BAA-477 / NRRL B-23932 / Pf-5).